A 201-amino-acid chain; its full sequence is MLAFTLRFIKNKRYLATLAGALVIIAGLTSQHAWSGNGLPQINGKALAALAKQHPVVVLFRHAERCDRSDNTCLSDSTGITVNGAQNARALGKAFSADIQNYNLYSSNTVRTIQSATWFSAGRSLTVDKKMMDCGSGIYASINTLLKKSQNKNIVIFTHNHCLTYIAKNKRGVKFDPDYLNALVMHAENGKLFLDGEFVPG.

The first 35 residues, 1 to 35, serve as a signal peptide directing secretion; sequence MLAFTLRFIKNKRYLATLAGALVIIAGLTSQHAWS.

It belongs to the phosphoglycerate mutase family. Ais subfamily.

The protein resides in the periplasm. Its pathway is bacterial outer membrane biogenesis; lipopolysaccharide metabolism. Functionally, catalyzes the dephosphorylation of heptose(II) of the outer membrane lipopolysaccharide core. This is Lipopolysaccharide core heptose(II)-phosphate phosphatase from Salmonella newport (strain SL254).